Reading from the N-terminus, the 128-residue chain is Calcitonin gene-related peptide 1 (128 aa).

An N-terminal signal peptide occupies residues 1–25 (MGFLKFSPFLVVSILLLYQACSLQA). Positions 26–80 (VPLRSILESSPGMATLSEEEVRLLAALVQDYMQMKARELEQEEEQEAEGSSVTAQ) are excised as a propeptide. A disulfide bond links C84 and C89. F119 carries the post-translational modification Phenylalanine amide. A propeptide spanning residues 125-128 (DLQA) is cleaved from the precursor.

This sequence belongs to the calcitonin family. Detected in nerve cells of cerebrum, hippocampus and pons/midbrain in newborns, and only in nerve cells of pons/midbrain in adult.

The protein resides in the secreted. Its function is as follows. CGRP1/CALCA is a peptide hormone that induces vasodilation mediated by the CALCRL-RAMP1 receptor complex. Dilates a variety of vessels including the coronary, cerebral and systemic vasculature. Its abundance in the CNS also points toward a neurotransmitter or neuromodulator role. It also elevates platelet cAMP. CGRP1 can also bind and activate CALCR-RAMP1 (AMYR1) receptor complex. This Mus musculus (Mouse) protein is Calcitonin gene-related peptide 1.